Here is a 67-residue protein sequence, read N- to C-terminus: Conotoxin TxMMSK-01 (67 aa).

The first 20 residues, 1 to 20 (MMSKLGVLLITCLLLFPLTA), serve as a signal peptide directing secretion. The propeptide occupies 21-53 (VPLDGDQPADQPAERLQDDISSENHPFFDPVKR). Disulfide bonds link Cys54–Cys66, Cys55–Cys62, and Cys59–Cys65. 4-hydroxyproline is present on Pro64. A Cysteine amide modification is found at Cys66.

The protein belongs to the conotoxin M superfamily. Expressed by the venom duct.

It is found in the secreted. This is Conotoxin TxMMSK-01 from Conus textile (Cloth-of-gold cone).